The chain runs to 238 residues: Enolase-phosphatase E1 (238 aa).

This sequence belongs to the HAD-like hydrolase superfamily. MasA/MtnC family. As to quaternary structure, monomer. Requires Mg(2+) as cofactor.

The enzyme catalyses 5-methylsulfanyl-2,3-dioxopentyl phosphate + H2O = 1,2-dihydroxy-5-(methylsulfanyl)pent-1-en-3-one + phosphate. It functions in the pathway amino-acid biosynthesis; L-methionine biosynthesis via salvage pathway; L-methionine from S-methyl-5-thio-alpha-D-ribose 1-phosphate: step 3/6. It participates in amino-acid biosynthesis; L-methionine biosynthesis via salvage pathway; L-methionine from S-methyl-5-thio-alpha-D-ribose 1-phosphate: step 4/6. In terms of biological role, bifunctional enzyme that catalyzes the enolization of 2,3-diketo-5-methylthiopentyl-1-phosphate (DK-MTP-1-P) into the intermediate 2-hydroxy-3-keto-5-methylthiopentenyl-1-phosphate (HK-MTPenyl-1-P), which is then dephosphorylated to form the acireductone 1,2-dihydroxy-3-keto-5-methylthiopentene (DHK-MTPene). The protein is Enolase-phosphatase E1 of Synechococcus elongatus (strain ATCC 33912 / PCC 7942 / FACHB-805) (Anacystis nidulans R2).